Reading from the N-terminus, the 351-residue chain is L-threonine 3-dehydrogenase (351 aa).

C42 provides a ligand contact to Zn(2+). Active-site charge relay system residues include T44 and H47. H67, E68, C97, C100, C103, and C111 together coordinate Zn(2+). Residues I179, D199, R204, 266-268, and 291-292 contribute to the NAD(+) site; these read LGL and IT.

Belongs to the zinc-containing alcohol dehydrogenase family. Homotetramer. Requires Zn(2+) as cofactor.

The protein resides in the cytoplasm. It catalyses the reaction L-threonine + NAD(+) = (2S)-2-amino-3-oxobutanoate + NADH + H(+). Its pathway is amino-acid degradation; L-threonine degradation via oxydo-reductase pathway; glycine from L-threonine: step 1/2. Its function is as follows. Catalyzes the NAD(+)-dependent oxidation of L-threonine to 2-amino-3-ketobutyrate. The chain is L-threonine 3-dehydrogenase from Symbiobacterium thermophilum (strain DSM 24528 / JCM 14929 / IAM 14863 / T).